The primary structure comprises 350 residues: Arginine N-succinyltransferase (350 aa).

L125 contributes to the succinyl-CoA binding site. The active-site Proton donor is the H229.

Belongs to the arginine N-succinyltransferase family.

It catalyses the reaction succinyl-CoA + L-arginine = N(2)-succinyl-L-arginine + CoA + H(+). Its pathway is amino-acid degradation; L-arginine degradation via AST pathway; L-glutamate and succinate from L-arginine: step 1/5. Catalyzes the transfer of succinyl-CoA to arginine to produce N(2)-succinylarginine. In Yersinia pestis, this protein is Arginine N-succinyltransferase.